The primary structure comprises 97 residues: Large ribosomal subunit protein eL21 (97 aa).

This sequence belongs to the eukaryotic ribosomal protein eL21 family.

The polypeptide is Large ribosomal subunit protein eL21 (Methanococcoides burtonii (strain DSM 6242 / NBRC 107633 / OCM 468 / ACE-M)).